Reading from the N-terminus, the 1007-residue chain is Serine/threonine-protein kinase PRP4 homolog (1007 aa).

Residues 1 to 10 show a composition bias toward polar residues; the sequence is MAAAETQSLR. A disordered region spans residues 1–99; sequence MAAAETQSLR…EGMSPAKRTK (99 aa). Residue A2 is modified to N-acetylalanine. Phosphoserine occurs at positions 8, 20, 23, and 32. Composition is skewed to basic residues over residues 39-59 and 67-81; these read KHSR…KHKH and KKHK…HKRK. The segment covering 82–91 has biased composition (basic and acidic residues); sequence EIIDASDKEG. 2 positions are modified to phosphoserine: S87 and S93. An N6-acetyllysine; alternate modification is found at K99. A Glycyl lysine isopeptide (Lys-Gly) (interchain with G-Cter in SUMO2); alternate cross-link involves residue K99. K111 participates in a covalent cross-link: Glycyl lysine isopeptide (Lys-Gly) (interchain with G-Cter in SUMO2). A Glycyl lysine isopeptide (Lys-Gly) (interchain with G-Cter in SUMO2); alternate cross-link involves residue K117. A Glycyl lysine isopeptide (Lys-Gly) (interchain with G-Cter in SUMO1); alternate cross-link involves residue K117. At S131 the chain carries Phosphoserine. At Y140 the chain carries Phosphotyrosine. Disordered stretches follow at residues 140-533 and 559-583; these read YESG…EEED and SNMS…SPDD. A phosphoserine mark is found at S142, S144, and S166. Over residues 157–168 the composition is skewed to low complexity; that stretch reads GNRSSTRSSSTK. Glycyl lysine isopeptide (Lys-Gly) (interchain with G-Cter in SUMO2) cross-links involve residues K170 and K177. Composition is skewed to basic residues over residues 179–202 and 214–230; these read TTKK…KKSK and RSKS…SKRS. A phosphoserine mark is found at S239, S241, S257, S277, S283, S292, and S294. Basic and acidic residues predominate over residues 247–270; the sequence is RSQEKIGKARSPTDDKVKIEDKSK. The segment covering 302-315 has biased composition (basic residues); that stretch reads SKDRRSRSKERKSK. The segment covering 316–325 has biased composition (basic and acidic residues); it reads RSETDKEKKP. Phosphoserine occurs at positions 328, 354, 356, 366, and 368. Residues 342–367 are compositionally biased toward basic residues; sequence PSRRPGRSPKRRSLSPKPRDKSRRSR. T385 carries the phosphothreonine modification. S387 carries the post-translational modification Phosphoserine. Composition is skewed to basic and acidic residues over residues 395 to 408 and 415 to 429; these read RSLE…ERRR and RPRD…RSKD. Phosphoserine occurs at positions 427, 431, and 437. Positions 438 to 497 are enriched in basic residues; sequence PTRRRSRSPIRRRSRSPLRRSRSPRRRSRSPRRRDRGRRSRSRLRRRSRSRGGRRRRSRS. Phosphoserine is present on residues S518, S519, S520, S565, S569, S578, and S580. Residues 518–533 are compositionally biased toward acidic residues; sequence SSSDDNLEDFDVEEED. Positions 562–581 are enriched in low complexity; sequence SVPSEPSSPQSSTRTRSPSP. Residues K593 and K659 each participate in a glycyl lysine isopeptide (Lys-Gly) (interchain with G-Cter in SUMO2) cross-link. The 320-residue stretch at 687 to 1006 folds into the Protein kinase domain; sequence YNVYGYTGQG…ALQHAFIQEK (320 aa). Residues 693-701 and K717 each bind ATP; that span reads TGQGVFSNV. N6-acetyllysine is present on K717. The Proton acceptor role is filled by D815. Position 849 is a phosphotyrosine (Y849). S852 bears the Phosphoserine mark.

This sequence belongs to the protein kinase superfamily. CMGC Ser/Thr protein kinase family. As to quaternary structure, interacts with CLK1 C-terminus. Associates with the U5 snRNP and NCOR1 deacetylase complexes. Identified in the spliceosome C complex. In terms of processing, phosphorylated by CLK1. Autophosphorylated; phosphorylation inhibits interaction with its targets, such as PRPF6 or SMARCA4. As to expression, ubiquitous.

It localises to the nucleus. The protein resides in the chromosome. It is found in the centromere. Its subcellular location is the kinetochore. It carries out the reaction L-seryl-[protein] + ATP = O-phospho-L-seryl-[protein] + ADP + H(+). The catalysed reaction is L-threonyl-[protein] + ATP = O-phospho-L-threonyl-[protein] + ADP + H(+). Functionally, serine/threonine kinase involved in spliceosomal assembly as well as mitosis and signaling regulation. Connects chromatin mediated regulation of transcription and pre-mRNA splicing. During spliceosomal assembly, interacts with and phosphorylates PRPF6 and PRPF31, components of the U4/U6-U5 tri-small nuclear ribonucleoprotein (snRNP), to facilitate the formation of the spliceosome B complex. Plays a role in regulating transcription and the spindle assembly checkpoint (SAC). Associates with U5 snRNP and NCOR1 deacetylase complexes which may allow a coordination of pre-mRNA splicing with chromatin remodeling events involved in transcriptional regulation. Associates and probably phosphorylates SMARCA4 and NCOR1. Phosphorylates SRSF1. Associates with kinetochores during mitosis and is necessary for recruitment and maintenance of the checkpoint proteins such as MAD1L1 and MAD12L1 at the kinetochores. Phosphorylates and regulates the activity of the transcription factors such as ELK1 and KLF13. Phosphorylates nuclear YAP1 and WWTR1/TAZ which induces nuclear exclusion and regulates Hippo signaling pathway, involved in tissue growth control. This is Serine/threonine-protein kinase PRP4 homolog from Homo sapiens (Human).